The chain runs to 305 residues: Virulence plasmid integrase pGP7-D (305 aa).

A Core-binding (CB) domain is found at 13–99 (LTFGEASEIW…CYISFTKFLY (87 aa)). The 177-residue stretch at 127–303 (VKTVSISKKE…GNSSVANIPT (177 aa)) folds into the Tyr recombinase domain. Residues Lys188 and Arg257 contribute to the active site. Tyr289 (O-(3'-phospho-DNA)-tyrosine intermediate) is an active-site residue.

This sequence belongs to the 'phage' integrase family.

The chain is Virulence plasmid integrase pGP7-D from Chlamydia muridarum (strain MoPn / Nigg).